Reading from the N-terminus, the 406-residue chain is Exodeoxyribonuclease 7 large subunit (406 aa).

This sequence belongs to the XseA family. Heterooligomer composed of large and small subunits.

The protein resides in the cytoplasm. The catalysed reaction is Exonucleolytic cleavage in either 5'- to 3'- or 3'- to 5'-direction to yield nucleoside 5'-phosphates.. Bidirectionally degrades single-stranded DNA into large acid-insoluble oligonucleotides, which are then degraded further into small acid-soluble oligonucleotides. The protein is Exodeoxyribonuclease 7 large subunit of Thermobifida fusca (strain YX).